We begin with the raw amino-acid sequence, 313 residues long: tRNA dimethylallyltransferase (313 aa).

Residue 11–18 (GPTAGGKT) coordinates ATP. A substrate-binding site is contributed by 13-18 (TAGGKT). Interaction with substrate tRNA regions lie at residues 36–39 (DSAL), 160–164 (QRIGR), and 243–248 (RCVGYR).

Belongs to the IPP transferase family. Monomer. Mg(2+) is required as a cofactor.

It carries out the reaction adenosine(37) in tRNA + dimethylallyl diphosphate = N(6)-dimethylallyladenosine(37) in tRNA + diphosphate. Its function is as follows. Catalyzes the transfer of a dimethylallyl group onto the adenine at position 37 in tRNAs that read codons beginning with uridine, leading to the formation of N6-(dimethylallyl)adenosine (i(6)A). The sequence is that of tRNA dimethylallyltransferase from Neisseria meningitidis serogroup B (strain ATCC BAA-335 / MC58).